The primary structure comprises 1578 residues: DNA-directed RNA polymerase subunit beta' (1578 aa).

Zn(2+) contacts are provided by C101, C103, C115, and C118. Mg(2+) is bound by residues D1286, D1288, and D1290.

This sequence belongs to the RNA polymerase beta' chain family. RpoC1 subfamily. In terms of assembly, in plastids the minimal PEP RNA polymerase catalytic core is composed of four subunits: alpha, beta, beta', and beta''. When a (nuclear-encoded) sigma factor is associated with the core the holoenzyme is formed, which can initiate transcription. It depends on Mg(2+) as a cofactor. The cofactor is Zn(2+).

The protein resides in the plastid. It localises to the chloroplast. It catalyses the reaction RNA(n) + a ribonucleoside 5'-triphosphate = RNA(n+1) + diphosphate. In terms of biological role, DNA-dependent RNA polymerase catalyzes the transcription of DNA into RNA using the four ribonucleoside triphosphates as substrates. The protein is DNA-directed RNA polymerase subunit beta' of Tupiella akineta (Green alga).